The primary structure comprises 151 residues: Linear element protein Mug20 (151 aa).

A coiled-coil region spans residues 56-140 (EEKLRALDKL…CAMEKLKMIE (85 aa)).

As to quaternary structure, component of linear elements (LinEs), which are similar to synaptonemal complexes, at least composed of rec27, rec25, rec10 and mug20. Interacts with rec10.

It is found in the cytoplasm. Its subcellular location is the nucleus. The protein localises to the chromosome. Its function is as follows. During meiotic DNA recombination, binds to and may help activate DNA double-strand break (DSB) hotspot sites. The polypeptide is Linear element protein Mug20 (Schizosaccharomyces pombe (strain 972 / ATCC 24843) (Fission yeast)).